The primary structure comprises 1537 residues: DNA (cytosine-5)-methyltransferase 1 (1537 aa).

Residues 1–13 (MPARSAPPPPALP) show a composition bias toward pro residues. 2 disordered regions span residues 1-34 (MPAR…SEKE) and 97-232 (RASN…DEKR). Positions 8 to 105 (PPPALPPALR…SRASNGCAGN (98 aa)) constitute a DMAP1-binding domain. Residues 21–34 (RDLERDEDSLSEKE) show a composition bias toward basic and acidic residues. The span at 129–154 (SSSSSSSSSSSSSSSSSSSSSLLPAP) shows a compositional bias: low complexity. Positions 171–194 (SPASSRVTRSSGRQPTILSVFSKG) are enriched in polar residues. The segment at 182–194 (GRQPTILSVFSKG) is interaction with PCNA. The span at 215 to 227 (KDEEEEEELEEKE) shows a compositional bias: acidic residues. Residues cysteine 263, cysteine 266, and histidine 329 each contribute to the Zn(2+) site. Serine 420 is modified (phosphoserine). Residues 558-604 (NAMKRRRCGVCEVCQQPECGKCKACQNMVKFGGSGRSKQACLQRRCP) form a CXXC-type zinc finger. The Zn(2+) site is built by cysteine 565, cysteine 568, cysteine 571, cysteine 576, cysteine 579, cysteine 582, cysteine 598, and cysteine 603. The segment at 614–638 (DEEVDDNIPEMPSPKKMLQGRKKKQ) is disordered. 2 BAH domains span residues 667-791 (ETLE…ETPP) and 883-1011 (HYRK…EDPP). The tract at residues 1006 to 1050 (SFEDPPNHARSSGNKGKGKGKGKGKGKGKSSTTCEQSEPEPTELK) is disordered. 7 tandem repeats follow at residues 1020 to 1021 (KG), 1022 to 1023 (KG), 1024 to 1025 (KG), 1026 to 1027 (KG), 1028 to 1029 (KG), 1030 to 1031 (KG), and 1032 to 1033 (KG). Positions 1020-1035 (KGKGKGKGKGKGKGKS) are 8 X 2 AA tandem repeats of K-G. Residues 1021–1033 (GKGKGKGKGKGKG) show a composition bias toward basic residues. The 8; approximate repeat unit spans residues 1034–1035 (KS). In terms of domain architecture, SAM-dependent MTase C5-type spans 1054–1513 (LRTLDVFSGC…LEIRACVGAR (460 aa)). S-adenosyl-L-methionine-binding positions include serine 1061, 1065–1066 (GL), 1083–1084 (EM), 1105–1106 (DC), and cysteine 1106. Cysteine 1141 is an active-site residue. The S-adenosyl-L-methionine site is built by asparagine 1492 and valine 1494. The segment at 1518–1537 (SGAAVAPPAPEKMEMTAAAD) is disordered.

It belongs to the class I-like SAM-binding methyltransferase superfamily. C5-methyltransferase family. As to quaternary structure, homodimer. Interacts with PCNA. Testis and lung.

It is found in the nucleus. The catalysed reaction is a 2'-deoxycytidine in DNA + S-adenosyl-L-methionine = a 5-methyl-2'-deoxycytidine in DNA + S-adenosyl-L-homocysteine + H(+). Functionally, methylates CpG residues. Preferentially methylates hemimethylated DNA. It is responsible for maintaining methylation patterns established in development. Mediates transcriptional repression by direct binding to HDAC2. Plays a role in promoter hypermethylation and transcriptional silencing of tumor suppressor genes (TSGs) or other tumor-related genes. Also required to maintain a transcriptionally repressive state of genes in undifferentiated embryonic stem cells (ESCs). Associates at promoter regions of tumor suppressor genes (TSGs) leading to their gene silencing. The sequence is that of DNA (cytosine-5)-methyltransferase 1 (DNMT1) from Gallus gallus (Chicken).